We begin with the raw amino-acid sequence, 316 residues long: 1-aminocyclopropane-1-carboxylate oxidase 2 (316 aa).

The Fe2OG dioxygenase domain maps to 153-253 (PNFGTKVSNY…RMSLASFYNP (101 aa)). Fe cation contacts are provided by His-177, Asp-179, and His-234.

The protein belongs to the iron/ascorbate-dependent oxidoreductase family. Fe cation serves as cofactor. As to expression, leaves.

The enzyme catalyses 1-aminocyclopropane-1-carboxylate + L-ascorbate + O2 = ethene + L-dehydroascorbate + hydrogen cyanide + CO2 + 2 H2O. Its pathway is alkene biosynthesis; ethylene biosynthesis via S-adenosyl-L-methionine; ethylene from S-adenosyl-L-methionine: step 2/2. The polypeptide is 1-aminocyclopropane-1-carboxylate oxidase 2 (ACO2) (Solanum lycopersicum (Tomato)).